Reading from the N-terminus, the 282-residue chain is 3-methyl-2-oxobutanoate hydroxymethyltransferase (282 aa).

2 residues coordinate Mg(2+): aspartate 46 and aspartate 85. 3-methyl-2-oxobutanoate is bound by residues 46–47, aspartate 85, and lysine 115; that span reads DS. Glutamate 117 serves as a coordination point for Mg(2+). Catalysis depends on glutamate 184, which acts as the Proton acceptor.

Belongs to the PanB family. Homodecamer; pentamer of dimers. It depends on Mg(2+) as a cofactor.

It localises to the cytoplasm. It carries out the reaction 3-methyl-2-oxobutanoate + (6R)-5,10-methylene-5,6,7,8-tetrahydrofolate + H2O = 2-dehydropantoate + (6S)-5,6,7,8-tetrahydrofolate. It participates in cofactor biosynthesis; (R)-pantothenate biosynthesis; (R)-pantoate from 3-methyl-2-oxobutanoate: step 1/2. Catalyzes the reversible reaction in which hydroxymethyl group from 5,10-methylenetetrahydrofolate is transferred onto alpha-ketoisovalerate to form ketopantoate. This chain is 3-methyl-2-oxobutanoate hydroxymethyltransferase, found in Alkaliphilus metalliredigens (strain QYMF).